A 318-amino-acid chain; its full sequence is MSLSLIIKWGGQEYTITSLSEEDTVLDLKQSLKGLTGVLPERQKLLGLKMKGKPADDDVKLGALKLKPNTKIMMMGTREESLEDVLGPPPDNDDVINDFDIEEEVVEVENREENLLKISRRVKEYKVEILNPPREGKKLLVLDVDYTLFDHRSCAETGVELMRPYLHEFLTSAYEDYDIVIWSATNMKWIEAKMKELGVSTNANYKITFMLDSAAMITVHTPRRGLIDVKPLGVIWGKFSEYYSKKNTIMFDDIGRNFLMNPQNGLKIRPFMKAHLNRDKDKELLKLTQYLKEIAKLDDFLELNHKHWERYLSKKQGQ.

The Ubiquitin-like domain occupies 3–81 (LSLIIKWGGQ…IMMMGTREES (79 aa)). In terms of domain architecture, FCP1 homology spans 133 to 294 (PREGKKLLVL…LKLTQYLKEI (162 aa)). Mg(2+) contacts are provided by D143, D145, and D253.

Mg(2+) serves as cofactor.

It is found in the nucleus. The enzyme catalyses O-phospho-L-seryl-[protein] + H2O = L-seryl-[protein] + phosphate. The catalysed reaction is O-phospho-L-threonyl-[protein] + H2O = L-threonyl-[protein] + phosphate. Functionally, dephosphorylates 26S nuclear proteasomes, thereby decreasing their proteolytic activity. Recruited to the 19S regulatory particle of the 26S proteasome where it dephosphorylates 19S component PSMC2 which impairs PSMC2 ATPase activity and disrupts 26S proteasome assembly. Has also been reported to stimulate the proteolytic activity of the 26S proteasome. This is Ubiquitin-like domain-containing CTD phosphatase 1 (UBLCP1) from Gallus gallus (Chicken).